The following is a 268-amino-acid chain: Proliferating cell nuclear antigen (268 aa).

Residues 61-80 (RCDRNPSMGMNLNNMAKMLK) mediate DNA binding.

It belongs to the PCNA family.

The protein resides in the nucleus. This protein is an auxiliary protein of DNA polymerase delta and is involved in the control of eukaryotic DNA replication by increasing the polymerase's processibility during elongation of the leading strand. The chain is Proliferating cell nuclear antigen from Catharanthus roseus (Madagascar periwinkle).